Reading from the N-terminus, the 199-residue chain is MNKSTNIVWQKTSVKKADRQHLNNHKSAVLWFTGLSGSGKSTLSSALEKELFSLETHTYHLDGDNVRHGLNKNLGFSPEDREENIRRIGEVSKLMVDAGLITLTAFISPYQEDRDHVRATLAQDEFIEIYVKCSLDMCEARDPKGLYKKARLGEINNFTGIDAPYEEPLHPEIVIDTENQSIEESVQTIIHYLKDKQYI.

ATP is bound at residue 34-41 (GLSGSGKS). Ser-108 serves as the catalytic Phosphoserine intermediate.

Belongs to the APS kinase family.

The catalysed reaction is adenosine 5'-phosphosulfate + ATP = 3'-phosphoadenylyl sulfate + ADP + H(+). It functions in the pathway sulfur metabolism; hydrogen sulfide biosynthesis; sulfite from sulfate: step 2/3. In terms of biological role, catalyzes the synthesis of activated sulfate. The sequence is that of Adenylyl-sulfate kinase from Oceanobacillus iheyensis (strain DSM 14371 / CIP 107618 / JCM 11309 / KCTC 3954 / HTE831).